The following is a 481-amino-acid chain: Aspartyl/glutamyl-tRNA(Asn/Gln) amidotransferase subunit B (481 aa).

It belongs to the GatB/GatE family. GatB subfamily. Heterotrimer of A, B and C subunits.

It catalyses the reaction L-glutamyl-tRNA(Gln) + L-glutamine + ATP + H2O = L-glutaminyl-tRNA(Gln) + L-glutamate + ADP + phosphate + H(+). The catalysed reaction is L-aspartyl-tRNA(Asn) + L-glutamine + ATP + H2O = L-asparaginyl-tRNA(Asn) + L-glutamate + ADP + phosphate + 2 H(+). Functionally, allows the formation of correctly charged Asn-tRNA(Asn) or Gln-tRNA(Gln) through the transamidation of misacylated Asp-tRNA(Asn) or Glu-tRNA(Gln) in organisms which lack either or both of asparaginyl-tRNA or glutaminyl-tRNA synthetases. The reaction takes place in the presence of glutamine and ATP through an activated phospho-Asp-tRNA(Asn) or phospho-Glu-tRNA(Gln). The sequence is that of Aspartyl/glutamyl-tRNA(Asn/Gln) amidotransferase subunit B from Marinomonas sp. (strain MWYL1).